The following is a 230-amino-acid chain: Uracil-DNA glycosylase (230 aa).

Asp70 acts as the Proton acceptor in catalysis.

This sequence belongs to the uracil-DNA glycosylase (UDG) superfamily. UNG family.

The protein resides in the cytoplasm. It catalyses the reaction Hydrolyzes single-stranded DNA or mismatched double-stranded DNA and polynucleotides, releasing free uracil.. Its function is as follows. Excises uracil residues from the DNA which can arise as a result of misincorporation of dUMP residues by DNA polymerase or due to deamination of cytosine. The polypeptide is Uracil-DNA glycosylase (Campylobacter concisus (strain 13826)).